We begin with the raw amino-acid sequence, 703 residues long: UvrABC system protein B (703 aa).

Positions 33–190 (TRIENGENDV…RRFVAMQYKR (158 aa)) constitute a Helicase ATP-binding domain. Residue 46–53 (GATGTGKT) coordinates ATP. The Beta-hairpin signature appears at 99–122 (YYDYYQPEAYIPQTDTYIEKDSNI). The Helicase C-terminal domain maps to 436–589 (QIDDLLAEIK…QIAYNQEHGI (154 aa)). The region spanning 659 to 694 (ADLIRQLSEQMHTAAEQLQFELAARLRDEIRDLKKE) is the UVR domain.

The protein belongs to the UvrB family. As to quaternary structure, forms a heterotetramer with UvrA during the search for lesions. Interacts with UvrC in an incision complex.

Its subcellular location is the cytoplasm. Functionally, the UvrABC repair system catalyzes the recognition and processing of DNA lesions. A damage recognition complex composed of 2 UvrA and 2 UvrB subunits scans DNA for abnormalities. Upon binding of the UvrA(2)B(2) complex to a putative damaged site, the DNA wraps around one UvrB monomer. DNA wrap is dependent on ATP binding by UvrB and probably causes local melting of the DNA helix, facilitating insertion of UvrB beta-hairpin between the DNA strands. Then UvrB probes one DNA strand for the presence of a lesion. If a lesion is found the UvrA subunits dissociate and the UvrB-DNA preincision complex is formed. This complex is subsequently bound by UvrC and the second UvrB is released. If no lesion is found, the DNA wraps around the other UvrB subunit that will check the other stand for damage. This chain is UvrABC system protein B, found in Bifidobacterium longum subsp. infantis (strain ATCC 15697 / DSM 20088 / JCM 1222 / NCTC 11817 / S12).